Reading from the N-terminus, the 205-residue chain is Holliday junction branch migration complex subunit RuvA (205 aa).

A domain I region spans residues 1 to 64; that stretch reads MIGRIRGLLV…EDAQLLYGFI (64 aa). A domain II region spans residues 65-143; it reads SKQERALFRL…SLMEASVGSE (79 aa). A flexible linker region spans residues 144 to 156; the sequence is REFMLQSNYTAPV. A domain III region spans residues 157–205; it reads VANTAEEDAIAALLSLGYKPAQASKAVSAVYVDGIDSESLIKSALKSML.

The protein belongs to the RuvA family. As to quaternary structure, homotetramer. Forms an RuvA(8)-RuvB(12)-Holliday junction (HJ) complex. HJ DNA is sandwiched between 2 RuvA tetramers; dsDNA enters through RuvA and exits via RuvB. An RuvB hexamer assembles on each DNA strand where it exits the tetramer. Each RuvB hexamer is contacted by two RuvA subunits (via domain III) on 2 adjacent RuvB subunits; this complex drives branch migration. In the full resolvosome a probable DNA-RuvA(4)-RuvB(12)-RuvC(2) complex forms which resolves the HJ.

It is found in the cytoplasm. Its function is as follows. The RuvA-RuvB-RuvC complex processes Holliday junction (HJ) DNA during genetic recombination and DNA repair, while the RuvA-RuvB complex plays an important role in the rescue of blocked DNA replication forks via replication fork reversal (RFR). RuvA specifically binds to HJ cruciform DNA, conferring on it an open structure. The RuvB hexamer acts as an ATP-dependent pump, pulling dsDNA into and through the RuvAB complex. HJ branch migration allows RuvC to scan DNA until it finds its consensus sequence, where it cleaves and resolves the cruciform DNA. The protein is Holliday junction branch migration complex subunit RuvA of Shewanella piezotolerans (strain WP3 / JCM 13877).